Here is a 109-residue protein sequence, read N- to C-terminus: Mitochondrial pyruvate carrier 1 (109 aa).

Ala-2 carries the N-acetylalanine modification. Topologically, residues Ala-2–Asp-20 are mitochondrial matrix. The chain crosses the membrane as a helical span at residues Tyr-21–Ile-41. Topologically, residues Asn-42 to Ser-52 are mitochondrial intermembrane. Residues Gly-53–Tyr-71 traverse the membrane as a helical segment. Position 72 is an N6-acetyllysine (Lys-72). Residues Lys-72–Ala-109 lie on the Mitochondrial matrix side of the membrane.

It belongs to the mitochondrial pyruvate carrier (MPC) (TC 2.A.105) family. In terms of assembly, homodimer. Forms heterodimer with MPC2. The heterodimer is the more stable and dominant form.

It localises to the mitochondrion inner membrane. It catalyses the reaction pyruvate(out) + H(+)(out) = pyruvate(in) + H(+)(in). Functionally, mediates the uptake of pyruvate into mitochondria. In Homo sapiens (Human), this protein is Mitochondrial pyruvate carrier 1 (MPC1).